The sequence spans 111 residues: Cytochrome b-c1 complex subunit 7 (111 aa).

Position 2 is an N-acetylalanine (Ala-2). An N6-acetyllysine; alternate modification is found at Lys-12. An N6-succinyllysine; alternate modification is found at Lys-12. An N6-acetyllysine modification is found at Lys-19. Lys-78 is subject to N6-acetyllysine; alternate. An N6-succinyllysine; alternate modification is found at Lys-78. 2 positions are modified to N6-acetyllysine: Lys-83 and Lys-96.

This sequence belongs to the UQCRB/QCR7 family. In terms of assembly, component of the ubiquinol-cytochrome c oxidoreductase (cytochrome b-c1 complex, complex III, CIII), a multisubunit enzyme composed of 11 subunits. The complex is composed of 3 respiratory subunits cytochrome b, cytochrome c1 and Rieske protein UQCRFS1, 2 core protein subunits UQCRC1/QCR1 and UQCRC2/QCR2, and 6 low-molecular weight protein subunits UQCRH/QCR6, UQCRB/QCR7, UQCRQ/QCR8, UQCR10/QCR9, UQCR11/QCR10 and subunit 9, the cleavage product of Rieske protein UQCRFS1. The complex exists as an obligatory dimer and forms supercomplexes (SCs) in the inner mitochondrial membrane with NADH-ubiquinone oxidoreductase (complex I, CI) and cytochrome c oxidase (complex IV, CIV), resulting in different assemblies (supercomplex SCI(1)III(2)IV(1) and megacomplex MCI(2)III(2)IV(2)).

It is found in the mitochondrion inner membrane. Its function is as follows. Component of the ubiquinol-cytochrome c oxidoreductase, a multisubunit transmembrane complex that is part of the mitochondrial electron transport chain which drives oxidative phosphorylation. The respiratory chain contains 3 multisubunit complexes succinate dehydrogenase (complex II, CII), ubiquinol-cytochrome c oxidoreductase (cytochrome b-c1 complex, complex III, CIII) and cytochrome c oxidase (complex IV, CIV), that cooperate to transfer electrons derived from NADH and succinate to molecular oxygen, creating an electrochemical gradient over the inner membrane that drives transmembrane transport and the ATP synthase. The cytochrome b-c1 complex catalyzes electron transfer from ubiquinol to cytochrome c, linking this redox reaction to translocation of protons across the mitochondrial inner membrane, with protons being carried across the membrane as hydrogens on the quinol. In the process called Q cycle, 2 protons are consumed from the matrix, 4 protons are released into the intermembrane space and 2 electrons are passed to cytochrome c. This Homo sapiens (Human) protein is Cytochrome b-c1 complex subunit 7 (UQCRB).